Reading from the N-terminus, the 360-residue chain is Terpene synthase 5 (360 aa).

Positions 87–92 (DDFLER) match the DDxx(x)D/E motif motif. The short motif at 237-245 (NDCVSYAKE) is the NDxxSxxxD/E motif element.

This sequence belongs to the terpene synthase family.

Terpene synthase that converts its substrate farnesyl diphosphate (FPP) into 2 yet unidentified sesquiterpenes. The protein is Terpene synthase 5 of Dictyostelium purpureum (Slime mold).